The sequence spans 375 residues: Vasculin (375 aa).

Disordered stretches follow at residues 49–109 and 356–375; these read SSDA…TSEI and DSVQ…SDDE. Polar residues predominate over residues 96-108; it reads MKSQLHSENNTSE. Positions 365-375 are enriched in low complexity; it reads TSSSSDTSDDE.

Belongs to the vasculin family.

The protein localises to the nucleus. Functions as a GC-rich promoter-specific transactivating transcription factor. The protein is Vasculin (gpbp1) of Xenopus tropicalis (Western clawed frog).